The sequence spans 103 residues: Small ribosomal subunit protein uS10 (103 aa).

It belongs to the universal ribosomal protein uS10 family. As to quaternary structure, part of the 30S ribosomal subunit.

Involved in the binding of tRNA to the ribosomes. The polypeptide is Small ribosomal subunit protein uS10 (Campylobacter jejuni subsp. jejuni serotype O:6 (strain 81116 / NCTC 11828)).